The sequence spans 927 residues: MSFWDNNKDTFLAAGKATAKGIGTGTKALGKAGYRTYKNSQGERRGVPDNEADKAERSSYETRNNTNTSAYSGAYSGSNTGSNTGSNSGTSYYQSQPRHVDVNAYPLPPKRVAGPGEVRPLGHQDQGQQHQQMQQPQQHYSQNAQYSQAPYQPQQPQYPQQPQQPQYPQQPYSQDTQYSQAPYHPQQQIQPQPLTEGERPIPTPPTQAGTQPQFQPQLQQYQNGHIQQSHPAETQQPTYQVEQQQQSYSTEPQQQLQQPIFQPQPQSQDPYQQSPEANDSNQRPPAYDDSQLQNTQQEPTQVDSEPVKKSLPDPSSFAPPPIHKNRGVSEPSDSASYKKTGVSGKPSHVGKHGTSTTPKPTTLDMDPSKIGQPPPKPYRENSETTLNSASSNVRQTPPLPTRQSSNTTQNQLQTTSTPVPPPRSNTASVNSTSSQASSLPAPLPLPDNTGSEGSQKKAPPPKPIKKPMQLTSDGSSRNAEPDTLKQEPKNYMPNFAEEIALRKNTNSSLSGKGNLNSEDFNSELNSKLEPVNFENHAKPEPSDATPSLVKPKPKVMPKPKIGPKPSISPKPETKGKPIIKSKSEIKAKPDLKPKPIIGTKPVTVFGSKKIGNDMPISDSPSNLHVNKSNTPPPPIPRPRSAASNTSTPPPPPPSRNYRRAKAAAPPIESGPPNLDLQLSTGWFATTSGPMVLPKDLSGLNYNTSYSYVTRGSDKSHTRNINLRLRDLAIISYAITWSNDNINNAKMEVTKFIPSPISNKIPTVDELVANQNRFGEYVASWSENKMGQKVGTGECWDLARDALLKGCGKHAFVSTYYHHGYPIISLQGSENGVSYVDGKSPLDELRRGDILQYTSCIFKDKIRGSVSTVGNPDHTSVVLENTGDKLIIAEQNINNLKIVKKTEICLQNLTQGIVVGYRPMPAGWGGNL.

Residues I22–G33 show a composition bias toward low complexity. The tract at residues I22–P671 is disordered. A compositionally biased stretch (basic and acidic residues) spans Q41–Y60. Low complexity-rich tracts occupy residues N67–Y93, H123–P193, and T206–Q222. Polar residues predominate over residues N223–A232. The segment covering E233–P275 has biased composition (low complexity). Polar residues-rich tracts occupy residues S290 to D303 and E383 to Q395. Low complexity-rich tracts occupy residues T401–T417 and S424–P440. A compositionally biased stretch (polar residues) spans Q469–N478. A compositionally biased stretch (basic and acidic residues) spans A479–P488. Over residues K503–S517 the composition is skewed to low complexity. The segment covering K558–S568 has biased composition (pro residues). Basic and acidic residues predominate over residues P571–P593. Over residues D618–N629 the composition is skewed to polar residues.

Belongs to the AIM3 family.

The protein localises to the membrane raft. This is Altered inheritance of mitochondria protein 3 (AIM3) from Debaryomyces hansenii (strain ATCC 36239 / CBS 767 / BCRC 21394 / JCM 1990 / NBRC 0083 / IGC 2968) (Yeast).